The primary structure comprises 205 residues: Thiamine-phosphate synthase (205 aa).

Residues 35–39 (QYRDK) and asparagine 67 contribute to the 4-amino-2-methyl-5-(diphosphooxymethyl)pyrimidine site. Residues aspartate 68 and aspartate 86 each contribute to the Mg(2+) site. Residue threonine 105 coordinates 4-amino-2-methyl-5-(diphosphooxymethyl)pyrimidine. Residue 132–134 (SLT) participates in 2-[(2R,5Z)-2-carboxy-4-methylthiazol-5(2H)-ylidene]ethyl phosphate binding. Lysine 135 provides a ligand contact to 4-amino-2-methyl-5-(diphosphooxymethyl)pyrimidine. Glycine 162 lines the 2-[(2R,5Z)-2-carboxy-4-methylthiazol-5(2H)-ylidene]ethyl phosphate pocket.

It belongs to the thiamine-phosphate synthase family. The cofactor is Mg(2+).

It catalyses the reaction 2-[(2R,5Z)-2-carboxy-4-methylthiazol-5(2H)-ylidene]ethyl phosphate + 4-amino-2-methyl-5-(diphosphooxymethyl)pyrimidine + 2 H(+) = thiamine phosphate + CO2 + diphosphate. It carries out the reaction 2-(2-carboxy-4-methylthiazol-5-yl)ethyl phosphate + 4-amino-2-methyl-5-(diphosphooxymethyl)pyrimidine + 2 H(+) = thiamine phosphate + CO2 + diphosphate. The catalysed reaction is 4-methyl-5-(2-phosphooxyethyl)-thiazole + 4-amino-2-methyl-5-(diphosphooxymethyl)pyrimidine + H(+) = thiamine phosphate + diphosphate. It functions in the pathway cofactor biosynthesis; thiamine diphosphate biosynthesis; thiamine phosphate from 4-amino-2-methyl-5-diphosphomethylpyrimidine and 4-methyl-5-(2-phosphoethyl)-thiazole: step 1/1. Its function is as follows. Condenses 4-methyl-5-(beta-hydroxyethyl)thiazole monophosphate (THZ-P) and 2-methyl-4-amino-5-hydroxymethyl pyrimidine pyrophosphate (HMP-PP) to form thiamine monophosphate (TMP). This Pseudomonas savastanoi pv. phaseolicola (strain 1448A / Race 6) (Pseudomonas syringae pv. phaseolicola (strain 1448A / Race 6)) protein is Thiamine-phosphate synthase.